Consider the following 530-residue polypeptide: UDP-glucuronosyltransferase 2B14 (530 aa).

The signal sequence occupies residues 1 to 24 (MSVKHVSVLLLLLQLSCCFRTGSC). Residues Asn-134 and Asn-316 are each glycosylated (N-linked (GlcNAc...) asparagine). The chain crosses the membrane as a helical span at residues 494–510 (VVGFLVSCAAFLIFLVI).

Belongs to the UDP-glycosyltransferase family.

The protein resides in the microsome membrane. Its subcellular location is the endoplasmic reticulum membrane. It carries out the reaction glucuronate acceptor + UDP-alpha-D-glucuronate = acceptor beta-D-glucuronoside + UDP + H(+). Its function is as follows. UDPGT is of major importance in the conjugation and subsequent elimination of potentially toxic xenobiotics and endogenous compounds. In Oryctolagus cuniculus (Rabbit), this protein is UDP-glucuronosyltransferase 2B14 (UGT2B14).